The primary structure comprises 329 residues: GDP-mannose transporter (329 aa).

The Cytoplasmic segment spans residues 1–13; that stretch reads MSELKVDTGRLSH. The chain crosses the membrane as a helical span at residues 14–34; the sequence is IANSGPMSILAYCASSILMTV. The Lumenal portion of the chain corresponds to 35 to 44; it reads TNKCVVGSDK. The chain crosses the membrane as a helical span at residues 45-65; that stretch reads FNMLFVMLFAQSLVCVTALVL. The Cytoplasmic segment spans residues 66 to 79; sequence LKALGYVQYRPLNK. The chain crosses the membrane as a helical span at residues 80–100; sequence VDVKNWLLISVLLVLMTYTSS. Topologically, residues 101-109 are lumenal; sequence RALKYLAVP. A helical membrane pass occupies residues 110–130; the sequence is IYTIFKNLTIILIAYGEVLFF. At 131–133 the chain is on the cytoplasmic side; sequence GGR. A helical transmembrane segment spans residues 134–154; the sequence is VTAMELSSFLLIVLSSVVATL. Residues 155–174 lie on the Lumenal side of the membrane; it reads GDQQALAKKPLAAAVESILG. A helical membrane pass occupies residues 175 to 195; it reads LNVGYFWMFTNCICSALFVLI. The Cytoplasmic portion of the chain corresponds to 196 to 214; it reads MRKRIALTKFKDFDTMFYN. The chain crosses the membrane as a helical span at residues 215–235; sequence NILSLPLLMLASFMFEDWGAA. Topologically, residues 236–245 are lumenal; that stretch reads NIARNLTKDY. Asn-240 carries N-linked (GlcNAc...) asparagine glycosylation. A helical membrane pass occupies residues 246 to 266; the sequence is IIIMIISGLASVGISYCSGWC. The Cytoplasmic segment spans residues 267–273; sequence VRVTSST. A helical membrane pass occupies residues 274–294; the sequence is TYSMVGALNKLPIALSGLLFF. Topologically, residues 295–298 are lumenal; sequence DAPK. The helical transmembrane segment at 299 to 319 threads the bilayer; that stretch reads NFLSIFSIFLGFLSGIVYAVA. Residues 320–329 lie on the Cytoplasmic side of the membrane; the sequence is KQKKQSQPAN.

It belongs to the TPT transporter family. SLC35D subfamily. In terms of assembly, homooligomer.

It is found in the golgi apparatus membrane. The protein resides in the cytoplasmic vesicle membrane. Its subcellular location is the endoplasmic reticulum membrane. Its function is as follows. Involved in the import of GDP-mannose from the cytoplasm into the Golgi lumen. This Eremothecium gossypii (strain ATCC 10895 / CBS 109.51 / FGSC 9923 / NRRL Y-1056) (Yeast) protein is GDP-mannose transporter (VRG4).